The primary structure comprises 313 residues: Ribosomal RNA small subunit methyltransferase H (313 aa).

Residues 35 to 37 (GGH), aspartate 55, phenylalanine 80, aspartate 102, and glutamine 109 each bind S-adenosyl-L-methionine.

The protein belongs to the methyltransferase superfamily. RsmH family.

The protein resides in the cytoplasm. The catalysed reaction is cytidine(1402) in 16S rRNA + S-adenosyl-L-methionine = N(4)-methylcytidine(1402) in 16S rRNA + S-adenosyl-L-homocysteine + H(+). Its function is as follows. Specifically methylates the N4 position of cytidine in position 1402 (C1402) of 16S rRNA. This is Ribosomal RNA small subunit methyltransferase H from Shewanella amazonensis (strain ATCC BAA-1098 / SB2B).